The following is a 440-amino-acid chain: Chromosome partition protein MukF (440 aa).

Positions 208-236 are leucine-zipper; the sequence is LSETSGTLRELQDTLEAAGDKLQANLLRI.

Belongs to the MukF family. As to quaternary structure, interacts, and probably forms a ternary complex, with MukE and MukB via its C-terminal region. The complex formation is stimulated by calcium or magnesium. It is required for an interaction between MukE and MukB.

Its subcellular location is the cytoplasm. It localises to the nucleoid. Involved in chromosome condensation, segregation and cell cycle progression. May participate in facilitating chromosome segregation by condensation DNA from both sides of a centrally located replisome during cell division. Not required for mini-F plasmid partitioning. Probably acts via its interaction with MukB and MukE. Overexpression results in anucleate cells. It has a calcium binding activity. The polypeptide is Chromosome partition protein MukF (Escherichia coli O157:H7).